We begin with the raw amino-acid sequence, 232 residues long: MIDQKVIVALDYDNQADALAFVDRIDPASCRLKVGKEMFTLFGPDFVRELHKRGFSVFLDLKFHDIPNTCSKAVRAAAELGVWMVNVHASGGERMMTASREILEPYGKDRPLLIGVTVLTSMEQSDLAGIGLNVAPQDHVIRLATLTKNSGLDGVVCSAQESSLLKNELGKEFKLVTPGIRPLGSEQGDQRRIMTPLEAVQAGSDYLVIGRPITQAVDPAAVLQAINTSLTK.

Residues aspartate 11, lysine 33, 60–69 (DLKFHDIPNT), threonine 120, arginine 181, glutamine 190, glycine 210, and arginine 211 each bind substrate. Catalysis depends on lysine 62, which acts as the Proton donor.

The protein belongs to the OMP decarboxylase family. Type 1 subfamily. Homodimer.

It carries out the reaction orotidine 5'-phosphate + H(+) = UMP + CO2. It participates in pyrimidine metabolism; UMP biosynthesis via de novo pathway; UMP from orotate: step 2/2. Catalyzes the decarboxylation of orotidine 5'-monophosphate (OMP) to uridine 5'-monophosphate (UMP). This Vibrio vulnificus (strain YJ016) protein is Orotidine 5'-phosphate decarboxylase.